We begin with the raw amino-acid sequence, 191 residues long: Fe/S biogenesis protein NfuA (191 aa).

2 residues coordinate [4Fe-4S] cluster: Cys149 and Cys152.

The protein belongs to the NfuA family. As to quaternary structure, homodimer. [4Fe-4S] cluster is required as a cofactor.

Involved in iron-sulfur cluster biogenesis. Binds a 4Fe-4S cluster, can transfer this cluster to apoproteins, and thereby intervenes in the maturation of Fe/S proteins. Could also act as a scaffold/chaperone for damaged Fe/S proteins. The polypeptide is Fe/S biogenesis protein NfuA (Sodalis glossinidius (strain morsitans)).